Reading from the N-terminus, the 306-residue chain is tRNA dimethylallyltransferase (306 aa).

14–21 (GPTAAGKS) contacts ATP. 16–21 (TAAGKS) is a substrate binding site. The interval 39 to 42 (DSRL) is interaction with substrate tRNA.

Belongs to the IPP transferase family. In terms of assembly, monomer. Mg(2+) serves as cofactor.

It carries out the reaction adenosine(37) in tRNA + dimethylallyl diphosphate = N(6)-dimethylallyladenosine(37) in tRNA + diphosphate. In terms of biological role, catalyzes the transfer of a dimethylallyl group onto the adenine at position 37 in tRNAs that read codons beginning with uridine, leading to the formation of N6-(dimethylallyl)adenosine (i(6)A). This is tRNA dimethylallyltransferase from Synechococcus sp. (strain ATCC 27144 / PCC 6301 / SAUG 1402/1) (Anacystis nidulans).